The primary structure comprises 192 residues: Probable nicotinate-nucleotide adenylyltransferase (192 aa).

It belongs to the NadD family.

The enzyme catalyses nicotinate beta-D-ribonucleotide + ATP + H(+) = deamido-NAD(+) + diphosphate. Its pathway is cofactor biosynthesis; NAD(+) biosynthesis; deamido-NAD(+) from nicotinate D-ribonucleotide: step 1/1. In terms of biological role, catalyzes the reversible adenylation of nicotinate mononucleotide (NaMN) to nicotinic acid adenine dinucleotide (NaAD). The protein is Probable nicotinate-nucleotide adenylyltransferase of Cereibacter sphaeroides (strain ATCC 17029 / ATH 2.4.9) (Rhodobacter sphaeroides).